Reading from the N-terminus, the 299-residue chain is GTPase Era (299 aa).

Residues 5-172 (KSGFVSIIGR…IDVLKTYLPE (168 aa)) enclose the Era-type G domain. Residues 13 to 20 (GRPNVGKS) are G1. Position 13 to 20 (13 to 20 (GRPNVGKS)) interacts with GTP. The segment at 39-43 (QTTRN) is G2. Positions 60-63 (DTPG) are G3. Residues 60–64 (DTPGI) and 122–125 (NKID) each bind GTP. A G4 region spans residues 122 to 125 (NKID). The segment at 151 to 153 (ISA) is G5. The region spanning 203–280 (TSEEIPHAIG…YLELWVKVQR (78 aa)) is the KH type-2 domain.

The protein belongs to the TRAFAC class TrmE-Era-EngA-EngB-Septin-like GTPase superfamily. Era GTPase family. As to quaternary structure, monomer.

The protein localises to the cytoplasm. Its subcellular location is the cell membrane. Its function is as follows. An essential GTPase that binds both GDP and GTP, with rapid nucleotide exchange. Plays a role in 16S rRNA processing and 30S ribosomal subunit biogenesis and possibly also in cell cycle regulation and energy metabolism. This Staphylococcus aureus (strain bovine RF122 / ET3-1) protein is GTPase Era.